Here is a 405-residue protein sequence, read N- to C-terminus: Tryptophan synthase beta chain (405 aa).

Lys-86 bears the N6-(pyridoxal phosphate)lysine mark.

It belongs to the TrpB family. In terms of assembly, tetramer of two alpha and two beta chains. It depends on pyridoxal 5'-phosphate as a cofactor.

The catalysed reaction is (1S,2R)-1-C-(indol-3-yl)glycerol 3-phosphate + L-serine = D-glyceraldehyde 3-phosphate + L-tryptophan + H2O. The protein operates within amino-acid biosynthesis; L-tryptophan biosynthesis; L-tryptophan from chorismate: step 5/5. In terms of biological role, the beta subunit is responsible for the synthesis of L-tryptophan from indole and L-serine. This chain is Tryptophan synthase beta chain, found in Shewanella piezotolerans (strain WP3 / JCM 13877).